We begin with the raw amino-acid sequence, 539 residues long: Tripartite motif-containing protein 26 (539 aa).

An RING-type zinc finger spans residues 16-57 (CSICLDYLRDPVTIDCGHVFCRSCTTDVRPISGSRPVCPLCK). The B box-type zinc finger occupies 97 to 138 (QDAKLCERHREKLHYYCEDDGKLLCVMCRESREHRPHTAVLM). Residues Cys102, His105, Cys124, and His130 each coordinate Zn(2+). A coiled-coil region spans residues 188-227 (IVAEFEQGHQFLREREEHLLEQLAKLEQELTEGREKFKSR). In terms of domain architecture, B30.2/SPRY spans 295–539 (RGLREFQGKL…WPGTRLLLRP (245 aa)). The interval 376–437 (REGWSEDEEE…EEEEEVLESC (62 aa)) is disordered. Acidic residues predominate over residues 380–434 (SEDEEEGDEEEEGEEEEEEEEAGYGDGYDDWETDEDEESLGDEEEEEEEEEEEVL).

The protein belongs to the TRIM/RBCC family. As to quaternary structure, interacts with TBK1; this interaction bridges together TBK1 and NEMO in order to activate TBK1. Interacts with INCA1. Autoubiquitinates upon viral infection. In turn, autoubiquitinated TRIM26 recruits NEMO and bridges TBK1-NEMO interaction.

It localises to the cytoplasm. It is found in the nucleus. The enzyme catalyses S-ubiquitinyl-[E2 ubiquitin-conjugating enzyme]-L-cysteine + [acceptor protein]-L-lysine = [E2 ubiquitin-conjugating enzyme]-L-cysteine + N(6)-ubiquitinyl-[acceptor protein]-L-lysine.. In terms of biological role, E3 ubiquitin-protein ligase which regulates the IFN-beta production and antiviral response downstream of various DNA-encoded pattern-recognition receptors (PRRs). Also plays a central role in determining the response to different forms of oxidative stress by controlling levels of DNA glycosylases NEIL1, NEIL3 and NTH1 that are involved in repair of damaged DNA. Promotes nuclear IRF3 ubiquitination and proteasomal degradation. Bridges together TBK1 and NEMO during the innate response to viral infection leading to the activation of TBK1. Positively regulates LPS-mediated inflammatory innate immune response by catalyzing the 'Lys-11'-linked polyubiquitination of TAB1 to enhance its activation and subsequent NF-kappa-B and MAPK signaling. In a manner independent of its catalytic activity, inhibits WWP2, a SOX2-directed E3 ubiquitin ligase, and thus protects SOX2 from polyubiquitination and proteasomal degradation. Ubiquitinates the histone acetyltransferase protein complex component PHF20 and thereby triggers its degradation in the nucleus after its recruitment by the histone demethylase KDM6B, serving as a scaffold protein. Upon induction by TGF-beta, ubiquitinates the TFIID component TAF7 for proteasomal degradation. Induces ferroptosis by ubiquitinating SLC7A11, a critical protein for lipid reactive oxygen species (ROS) scavenging. The polypeptide is Tripartite motif-containing protein 26 (TRIM26) (Pan troglodytes (Chimpanzee)).